We begin with the raw amino-acid sequence, 245 residues long: Biosynthetic peptidoglycan transglycosylase (245 aa).

The chain crosses the membrane as a helical span at residues 24–44 (LVVIGAWLAGILLFSFLPVPF).

The protein belongs to the glycosyltransferase 51 family.

It localises to the cell inner membrane. It carries out the reaction [GlcNAc-(1-&gt;4)-Mur2Ac(oyl-L-Ala-gamma-D-Glu-L-Lys-D-Ala-D-Ala)](n)-di-trans,octa-cis-undecaprenyl diphosphate + beta-D-GlcNAc-(1-&gt;4)-Mur2Ac(oyl-L-Ala-gamma-D-Glu-L-Lys-D-Ala-D-Ala)-di-trans,octa-cis-undecaprenyl diphosphate = [GlcNAc-(1-&gt;4)-Mur2Ac(oyl-L-Ala-gamma-D-Glu-L-Lys-D-Ala-D-Ala)](n+1)-di-trans,octa-cis-undecaprenyl diphosphate + di-trans,octa-cis-undecaprenyl diphosphate + H(+). It participates in cell wall biogenesis; peptidoglycan biosynthesis. Functionally, peptidoglycan polymerase that catalyzes glycan chain elongation from lipid-linked precursors. The sequence is that of Biosynthetic peptidoglycan transglycosylase from Pectobacterium atrosepticum (strain SCRI 1043 / ATCC BAA-672) (Erwinia carotovora subsp. atroseptica).